Here is a 360-residue protein sequence, read N- to C-terminus: Alanine racemase (360 aa).

Lys-33 serves as the catalytic Proton acceptor; specific for D-alanine. Lys-33 is modified (N6-(pyridoxal phosphate)lysine). Position 129 (Arg-129) interacts with substrate. Residue Tyr-253 is the Proton acceptor; specific for L-alanine of the active site. Position 301 (Met-301) interacts with substrate.

The protein belongs to the alanine racemase family. The cofactor is pyridoxal 5'-phosphate.

It catalyses the reaction L-alanine = D-alanine. It functions in the pathway amino-acid biosynthesis; D-alanine biosynthesis; D-alanine from L-alanine: step 1/1. Catalyzes the interconversion of L-alanine and D-alanine. May also act on other amino acids. The protein is Alanine racemase (alr) of Xanthomonas campestris pv. campestris (strain 8004).